The sequence spans 425 residues: Stabilizer of axonemal microtubules 4 (425 aa).

Disordered regions lie at residues 93–126 (PLEV…PPTK), 203–225 (EGSG…SQAL), and 316–335 (KEPT…PCDP). Residues 207-222 (FTKQSHQSPIVFQPPS) are compositionally biased toward polar residues.

As to quaternary structure, microtubule inner protein component of sperm flagellar doublet microtubules. Interacts with PPP1CA.

The protein resides in the cell projection. The protein localises to the cilium. Its subcellular location is the cytoplasm. It is found in the cytoskeleton. It localises to the flagellum axoneme. The protein is Stabilizer of axonemal microtubules 4 of Homo sapiens (Human).